A 153-amino-acid chain; its full sequence is Probable trafficking protein particle complex subunit 2 (153 aa).

This sequence belongs to the TRAPP small subunits family. Sedlin subfamily. As to quaternary structure, part of the multisubunit TRAPP (transport protein particle) complex.

The protein localises to the cytoplasm. It is found in the perinuclear region. It localises to the endoplasmic reticulum. Its subcellular location is the golgi apparatus. In terms of biological role, may play a role in vesicular transport from endoplasmic reticulum to Golgi. The sequence is that of Probable trafficking protein particle complex subunit 2 from Nematostella vectensis (Starlet sea anemone).